Reading from the N-terminus, the 106-residue chain is Malonate decarboxylase acyl carrier protein (106 aa).

Ser-28 bears the O-(phosphoribosyl dephospho-coenzyme A)serine mark.

This sequence belongs to the MdcC family. Covalently binds the prosthetic group of malonate decarboxylase.

It is found in the cytoplasm. Subunit of malonate decarboxylase, it is an acyl carrier protein to which acetyl and malonyl thioester residues are bound via a 2'-(5''-phosphoribosyl)-3'-dephospho-CoA prosthetic group and turn over during the catalytic mechanism. The chain is Malonate decarboxylase acyl carrier protein from Stenotrophomonas maltophilia (strain K279a).